A 341-amino-acid chain; its full sequence is MFKELLKKCLRGESLSAEEAEKIMNDIMNGKVPAAQIASVLTILTYRGETVDEIVGFVRGMKNNMNAISLEELNVVDTCGTGGDGASTFNISTASAIVASAAGVKVAKHGNRAVSSKSGSADVLEHLDIWIQGNEKEVKNAVADLNMSFLFAPLYHPAMKHVAATRKELGFRTVFNALGPLANPTNCTKQVIGVYSIELARKLAEALVVLGANHVLLVAGRDGLDEISATDVTDVVEVQGNVITEYTLAPEDVHLQRGKLEDLVVEDAKSSAELIESLFLNKSNVTAKNAVVLNSAAAIYVSGNVSTFEEGVAVALETIESGAAYTQLQRLKSKKVVEHAQ.

Residues Gly80, 83-84 (GD), Thr88, 90-93 (NIST), 108-116 (KHGNRAVSS), and Ser120 contribute to the 5-phospho-alpha-D-ribose 1-diphosphate site. Gly80 lines the anthranilate pocket. Residue Ser92 participates in Mg(2+) binding. Residue Asn111 coordinates anthranilate. Anthranilate is bound at residue Arg166. Mg(2+)-binding residues include Asp225 and Glu226.

The protein belongs to the anthranilate phosphoribosyltransferase family. Homodimer. Mg(2+) serves as cofactor.

The enzyme catalyses N-(5-phospho-beta-D-ribosyl)anthranilate + diphosphate = 5-phospho-alpha-D-ribose 1-diphosphate + anthranilate. It participates in amino-acid biosynthesis; L-tryptophan biosynthesis; L-tryptophan from chorismate: step 2/5. Catalyzes the transfer of the phosphoribosyl group of 5-phosphorylribose-1-pyrophosphate (PRPP) to anthranilate to yield N-(5'-phosphoribosyl)-anthranilate (PRA). The polypeptide is Anthranilate phosphoribosyltransferase (Priestia megaterium (strain ATCC 12872 / QMB1551) (Bacillus megaterium)).